Reading from the N-terminus, the 715-residue chain is Fatty acid oxidation complex subunit alpha (715 aa).

The segment at 1–190 is enoyl-CoA hydratase; it reads MTTTSAFMLN…KAGLVDDVVP (190 aa). The interval 306–714 is 3-hydroxyacyl-CoA dehydrogenase; that stretch reads GPLNSVGILG…FWTNGETDQG (409 aa).

The protein in the N-terminal section; belongs to the enoyl-CoA hydratase/isomerase family. In the central section; belongs to the 3-hydroxyacyl-CoA dehydrogenase family. In terms of assembly, heterotetramer of two alpha chains (FadJ) and two beta chains (FadI).

It localises to the cytoplasm. It carries out the reaction a (3S)-3-hydroxyacyl-CoA = a (2E)-enoyl-CoA + H2O. The enzyme catalyses a 4-saturated-(3S)-3-hydroxyacyl-CoA = a (3E)-enoyl-CoA + H2O. It catalyses the reaction a (3S)-3-hydroxyacyl-CoA + NAD(+) = a 3-oxoacyl-CoA + NADH + H(+). The catalysed reaction is (3S)-3-hydroxybutanoyl-CoA = (3R)-3-hydroxybutanoyl-CoA. Its pathway is lipid metabolism; fatty acid beta-oxidation. Its function is as follows. Catalyzes the formation of a hydroxyacyl-CoA by addition of water on enoyl-CoA. Also exhibits 3-hydroxyacyl-CoA epimerase and 3-hydroxyacyl-CoA dehydrogenase activities. The chain is Fatty acid oxidation complex subunit alpha from Salmonella typhimurium (strain LT2 / SGSC1412 / ATCC 700720).